The primary structure comprises 538 residues: Beta-1-syntrophin (538 aa).

The residue at position 2 (Ala-2) is an N-acetylalanine. PH domains lie at 19–298 (RAQR…SNVN) and 322–433 (EIRH…QGCH). Ser-87, Ser-126, and Ser-205 each carry phosphoserine. The 84-residue stretch at 112–195 (GVKVLKQELG…EVLLEVKYMR (84 aa)) folds into the PDZ domain. Residues 205–237 (SPVSEIGWETPPPESPRLGGSTSDPPSSQSFSF) form a disordered region. The residue at position 214 (Thr-214) is a Phosphothreonine. Ser-219, Ser-232, Ser-236, and Ser-389 each carry phosphoserine. Residues 225-236 (STSDPPSSQSFS) show a composition bias toward low complexity. The 57-residue stretch at 482 to 538 (PYEKLKMSSDDGIRMLYLDFGGKDGEIQLDLHSCPKPIVFIIHSFLSAKITRLGLVA) folds into the SU domain. Positions 518–538 (PIVFIIHSFLSAKITRLGLVA) are calmodulin-binding.

Belongs to the syntrophin family. Monomer and homodimer. Interacts with the other members of the syntrophin family SNTA1 and SNTB2; with the sodium channel proteins SCN4A and SCN5A. Interacts with the viral HTLV-1 TAX protein and with dystrophin protein DMD and related proteins DTNA and UTRN. Interacts with DTNB. Post-translationally, phosphorylated by CaM-kinase II. As to expression, ubiquitous.

It localises to the cell membrane. The protein localises to the sarcolemma. It is found in the cell junction. The protein resides in the cytoplasm. Its subcellular location is the cytoskeleton. Its function is as follows. Adapter protein that binds to and probably organizes the subcellular localization of a variety of membrane proteins. May link various receptors to the actin cytoskeleton and the dystrophin glycoprotein complex. In Homo sapiens (Human), this protein is Beta-1-syntrophin (SNTB1).